The sequence spans 148 residues: Endoribonuclease YbeY (148 aa).

3 residues coordinate Zn(2+): His-113, His-117, and His-123.

Belongs to the endoribonuclease YbeY family. Requires Zn(2+) as cofactor.

It localises to the cytoplasm. In terms of biological role, single strand-specific metallo-endoribonuclease involved in late-stage 70S ribosome quality control and in maturation of the 3' terminus of the 16S rRNA. The chain is Endoribonuclease YbeY from Borrelia turicatae (strain 91E135).